Consider the following 164-residue polypeptide: Glycine cleavage system H protein, mitochondrial (164 aa).

A mitochondrion-targeting transit peptide spans 1–34; it reads MALRLWASSAANALKISCSGATRAAPAYSISRYF. Positions 56–138 constitute a Lipoyl-binding domain; sequence VATIGITDHA…YEDGWMIKVK (83 aa). Position 97 is an N6-lipoyllysine (lysine 97).

This sequence belongs to the GcvH family. The glycine cleavage system is composed of four proteins: P, T, L and H. Requires (R)-lipoate as cofactor.

It is found in the mitochondrion. The glycine cleavage system catalyzes the degradation of glycine. The H protein shuttles the methylamine group of glycine from the P protein to the T protein. This chain is Glycine cleavage system H protein, mitochondrial (GDCSH), found in Oryza sativa subsp. indica (Rice).